The primary structure comprises 178 residues: 3-isopropylmalate dehydratase small subunit (178 aa).

The protein belongs to the LeuD family. LeuD type 1 subfamily. As to quaternary structure, heterodimer of LeuC and LeuD.

The catalysed reaction is (2R,3S)-3-isopropylmalate = (2S)-2-isopropylmalate. It functions in the pathway amino-acid biosynthesis; L-leucine biosynthesis; L-leucine from 3-methyl-2-oxobutanoate: step 2/4. Functionally, catalyzes the isomerization between 2-isopropylmalate and 3-isopropylmalate, via the formation of 2-isopropylmaleate. The polypeptide is 3-isopropylmalate dehydratase small subunit (leuD) (Paenibacillus polymyxa (Bacillus polymyxa)).